We begin with the raw amino-acid sequence, 701 residues long: Elongation factor G (701 aa).

Residues 8-290 (SLYRNIGISA…AVIDYLPAPT (283 aa)) form the tr-type G domain. GTP is bound by residues 17 to 24 (AHIDAGKT), 88 to 92 (DTPGH), and 142 to 145 (NKMD).

It belongs to the TRAFAC class translation factor GTPase superfamily. Classic translation factor GTPase family. EF-G/EF-2 subfamily.

The protein resides in the cytoplasm. Catalyzes the GTP-dependent ribosomal translocation step during translation elongation. During this step, the ribosome changes from the pre-translocational (PRE) to the post-translocational (POST) state as the newly formed A-site-bound peptidyl-tRNA and P-site-bound deacylated tRNA move to the P and E sites, respectively. Catalyzes the coordinated movement of the two tRNA molecules, the mRNA and conformational changes in the ribosome. In Haemophilus ducreyi (strain 35000HP / ATCC 700724), this protein is Elongation factor G.